The primary structure comprises 218 residues: Cold-regulated protein 28 (218 aa).

Disordered regions lie at residues 1 to 51 (MEND…ADSK) and 166 to 218 (TKHS…KPRT). Residues 20-37 (EASAESQSESTLSNSLDS) are compositionally biased toward low complexity. Positions 186–207 (GEVSKKREREANNDDSSLKEDQ) are enriched in basic and acidic residues.

It is found in the nucleus. Functionally, together with COR27, involved in central circadian clock regulation and in flowering promotion, by binding to the chromatin of clock-associated evening genes TOC1, PRR5, ELF4 and cold-responsive genes in order to repress their transcription. Negative regulator of freezing tolerance. This chain is Cold-regulated protein 28, found in Arabidopsis thaliana (Mouse-ear cress).